A 77-amino-acid polypeptide reads, in one-letter code: U11-lycotoxin-Ls1a (77 aa).

The N-terminal stretch at 1 to 20 is a signal peptide; that stretch reads MKLIILTGLVLFAIVSFIEA. Residues 21–26 constitute a propeptide that is removed on maturation; it reads EEETGR.

Belongs to the neurotoxin 19 (CSTX) family. 10 (U11-Lctx) subfamily. In terms of processing, contains 4 disulfide bonds. In terms of tissue distribution, expressed by the venom gland.

The protein localises to the secreted. This Lycosa singoriensis (Wolf spider) protein is U11-lycotoxin-Ls1a.